We begin with the raw amino-acid sequence, 512 residues long: Tabersonine 16-hydroxylase 2 (512 aa).

Residue M1 is a topological domain, lumenal. A helical membrane pass occupies residues 2–22 (ELYYFSTFAFLLFCFILAKTL). The Cytoplasmic segment spans residues 23 to 512 (KKSGQSNLKL…YSASSLKGKY (490 aa)). Residue C445 participates in heme binding.

This sequence belongs to the cytochrome P450 family. Heme serves as cofactor. In terms of tissue distribution, expressed at low levels in roots, fruits, stems, flower buds and flowers, but highly expressed in young leaves. Detected in adaxial and abaxial epidermis cells.

The protein localises to the endoplasmic reticulum membrane. It catalyses the reaction (-)-tabersonine + reduced [NADPH--hemoprotein reductase] + O2 = 16-hydroxytabersonine + oxidized [NADPH--hemoprotein reductase] + H2O + H(+). Involved in the foliar biosynthesis of vindoline, a precursor of vinblastine and vincristine. Hydroxylates specifically tabersonine, 2,3-dihydrotabersonine and 2,3-dihydro-3-hydroxytabersonine, but has no activity with naringenin, tryptamine, secologanin, strictosidine, ajmalicine, vindoline and catharanthine. This is Tabersonine 16-hydroxylase 2 from Catharanthus roseus (Madagascar periwinkle).